We begin with the raw amino-acid sequence, 36 residues long: Cytochrome b6-f complex subunit 7 (36 aa).

The chain crosses the membrane as a helical span at residues 9–29 (NGAFIMIGLTLLGLAWGFVII).

It belongs to the PetM family. As to quaternary structure, the 4 large subunits of the cytochrome b6-f complex are cytochrome b6, subunit IV (17 kDa polypeptide, PetD), cytochrome f and the Rieske protein, while the 4 small subunits are PetG, PetL, PetM and PetN. The complex functions as a dimer.

It localises to the cellular thylakoid membrane. Component of the cytochrome b6-f complex, which mediates electron transfer between photosystem II (PSII) and photosystem I (PSI), cyclic electron flow around PSI, and state transitions. This is Cytochrome b6-f complex subunit 7 from Synechocystis sp. (strain ATCC 27184 / PCC 6803 / Kazusa).